The chain runs to 30 residues: Snaclec carinactivase-1 regulatory subunit 14 kDa chain (30 aa).

Positions 1–30 (DCLPDWFHYEGHCYRVFDEPKKWADAEKFC) constitute a C-type lectin domain. Cys2 and Cys13 are oxidised to a cystine.

It belongs to the snaclec family. In terms of assembly, heterodimer of a metalloproteinase subunit and a regulatory subunit comprising two polypeptides disulfide-linked (14 kDa and 17 kDa chains). In terms of tissue distribution, expressed by the venom gland.

The protein resides in the secreted. Functionally, calcium-dependent prothrombin activator. This protein may activate prothrombin via recognition by the regulatory subunit of the calcium ion bound conformation of its gamma-carboxyglutamic acid (GLA) domain, and the subsequent conversion of prothrombin to active thrombin is catalyzed by the catalytic subunit. The chain is Snaclec carinactivase-1 regulatory subunit 14 kDa chain from Echis carinatus (Saw-scaled viper).